We begin with the raw amino-acid sequence, 145 residues long: Peptidyl-prolyl cis-trans isomerase (145 aa).

Residues 1–145 (MTQAILETEK…LSVKIVTDAA (145 aa)) enclose the PPIase cyclophilin-type domain.

Belongs to the cyclophilin-type PPIase family.

It carries out the reaction [protein]-peptidylproline (omega=180) = [protein]-peptidylproline (omega=0). In terms of biological role, PPIases accelerate the folding of proteins. It catalyzes the cis-trans isomerization of proline imidic peptide bonds in oligopeptides. The sequence is that of Peptidyl-prolyl cis-trans isomerase (rot) from Synechococcus elongatus (strain ATCC 33912 / PCC 7942 / FACHB-805) (Anacystis nidulans R2).